Consider the following 275-residue polypeptide: 3-methyl-2-oxobutanoate hydroxymethyltransferase (275 aa).

Asp-51 and Asp-90 together coordinate Mg(2+). 3-methyl-2-oxobutanoate contacts are provided by residues 51-52, Asp-90, and Lys-120; that span reads DS. Glu-122 contacts Mg(2+). Glu-189 acts as the Proton acceptor in catalysis.

This sequence belongs to the PanB family. As to quaternary structure, homodecamer; pentamer of dimers. Mg(2+) is required as a cofactor.

The protein resides in the cytoplasm. It catalyses the reaction 3-methyl-2-oxobutanoate + (6R)-5,10-methylene-5,6,7,8-tetrahydrofolate + H2O = 2-dehydropantoate + (6S)-5,6,7,8-tetrahydrofolate. It participates in cofactor biosynthesis; (R)-pantothenate biosynthesis; (R)-pantoate from 3-methyl-2-oxobutanoate: step 1/2. Its function is as follows. Catalyzes the reversible reaction in which hydroxymethyl group from 5,10-methylenetetrahydrofolate is transferred onto alpha-ketoisovalerate to form ketopantoate. The polypeptide is 3-methyl-2-oxobutanoate hydroxymethyltransferase (Caulobacter vibrioides (strain ATCC 19089 / CIP 103742 / CB 15) (Caulobacter crescentus)).